The primary structure comprises 359 residues: Alanine racemase (359 aa).

The active-site Proton acceptor; specific for D-alanine is the lysine 35. Lysine 35 carries the N6-(pyridoxal phosphate)lysine modification. A substrate-binding site is contributed by arginine 130. Catalysis depends on tyrosine 255, which acts as the Proton acceptor; specific for L-alanine. Residue methionine 303 coordinates substrate.

This sequence belongs to the alanine racemase family. The cofactor is pyridoxal 5'-phosphate.

The catalysed reaction is L-alanine = D-alanine. The protein operates within amino-acid biosynthesis; D-alanine biosynthesis; D-alanine from L-alanine: step 1/1. Its function is as follows. Catalyzes the interconversion of L-alanine and D-alanine. May also act on other amino acids. The sequence is that of Alanine racemase (alr) from Janthinobacterium sp. (strain Marseille) (Minibacterium massiliensis).